The following is a 962-amino-acid chain: AP2-associated protein kinase 1 (962 aa).

Met-1 bears the N-acetylmethionine mark. A compositionally biased stretch (basic and acidic residues) spans 1-11 (MKKFFDSRREQ). The interval 1 to 27 (MKKFFDSRREQGSSGLGSGSSGGGGSS) is disordered. Ser-14 is modified (phosphoserine). Gly residues predominate over residues 14–27 (SGLGSGSSGGGGSS). The 269-residue stretch at 46–314 (VTVDEVLAEG…QVSYFSFKLL (269 aa)) folds into the Protein kinase domain. ATP contacts are provided by residues 52-60 (LAEGGFALV) and Lys-74. The active-site Proton acceptor is the Asp-176. Tyr-234 is modified (phosphotyrosine). Ser-235 carries the phosphoserine modification. Disordered regions lie at residues 325–515 (NSPI…QFQA) and 576–633 (PQAQ…RAGH). Phosphothreonine occurs at positions 353 and 388. The residue at position 390 (Arg-390) is an Omega-N-methylarginine. Over residues 397 to 418 (PLPQATGPSNQPSLLASVSQPK) the composition is skewed to polar residues. Low complexity predominate over residues 419–434 (AQATPSQPLQSSQPKQ). The span at 435–444 (PQAPPTPQQT) shows a compositional bias: pro residues. Position 440 is a phosphothreonine (Thr-440). Low complexity-rich tracts occupy residues 445 to 485 (PAPQ…QPQQ), 498 to 514 (QQQQPQQQQAQTQQQFQ), and 576 to 606 (PQAQPATAPQAAAAQEPQIQAPARQQPKVQT). Thr-607 bears the Phosphothreonine mark. The span at 614 to 628 (GQKVGSLTPPSSPKT) shows a compositional bias: polar residues. A Phosphoserine modification is found at Ser-619. Phosphothreonine is present on Thr-621. 4 positions are modified to phosphoserine: Ser-624, Ser-625, Ser-638, and Ser-651. At Thr-654 the chain carries Phosphothreonine. The span at 664–677 (ASLSKSKSATTTPS) shows a compositional bias: low complexity. Residues 664–702 (ASLSKSKSATTTPSGSPRTSQQNVSNASEGSTWNPFDDD) are disordered. Residues 678 to 697 (GSPRTSQQNVSNASEGSTWN) show a composition bias toward polar residues. A phosphoserine mark is found at Ser-732, Ser-847, Ser-938, and Ser-939. The clathrin-binding domain (CBD) stretch occupies residues 824–961 (EKADAAVESL…SLLLVDQLID (138 aa)). Disordered regions lie at residues 839–860 (PPVAQRLPSHTESVTSNRTDSL) and 925–946 (LITKNTQGGHSRNSSGSSESSL). Residues 846 to 860 (PSHTESVTSNRTDSL) are compositionally biased toward polar residues. Residues 932 to 945 (GGHSRNSSGSSESS) show a composition bias toward low complexity.

The protein belongs to the protein kinase superfamily. Ser/Thr protein kinase family. Interacts (via CBD domain) with clathrin. Interacts with AP-2 complex. Interacts with NUMB. Interacts with alpha-adaptin. Interacts with EPS15. Interacts with membrane-bound activated NOTCH1 but not with the inactive full-length form of NOTCH1. Preferentially interacts with monoubiquitinated activated NOTCH1 compared to the non-ubiquitinated form. Autophosphorylated.

The protein localises to the cell membrane. The protein resides in the membrane. It is found in the clathrin-coated pit. Its subcellular location is the presynapse. It catalyses the reaction L-seryl-[protein] + ATP = O-phospho-L-seryl-[protein] + ADP + H(+). The enzyme catalyses L-threonyl-[protein] + ATP = O-phospho-L-threonyl-[protein] + ADP + H(+). With respect to regulation, stimulated by clathrin. Functionally, regulates clathrin-mediated endocytosis by phosphorylating the AP2M1/mu2 subunit of the adaptor protein complex 2 (AP-2) which ensures high affinity binding of AP-2 to cargo membrane proteins during the initial stages of endocytosis. Preferentially, may phosphorylate substrates on threonine residues. Regulates phosphorylation of other AP-2 subunits as well as AP-2 localization and AP-2-mediated internalization of ligand complexes. Phosphorylates NUMB and regulates its cellular localization, promoting NUMB localization to endosomes. Binds to and stabilizes the activated form of NOTCH1, increases its localization in endosomes and regulates its transcriptional activity. The polypeptide is AP2-associated protein kinase 1 (Aak1) (Rattus norvegicus (Rat)).